The sequence spans 524 residues: Zinc finger CCCH domain-containing protein 37 (524 aa).

Positions 19–39 (ASTVSPAPPPPQQPLPPKTGL) are disordered. Residues 24 to 35 (PAPPPPQQPLPP) show a composition bias toward pro residues. 3 consecutive C3H1-type zinc fingers follow at residues 174 to 202 (RAGEKDCTHYMQTRTCKFGESCRFDHPIW), 225 to 253 (RPGEPDCPYYIKTQRCKYGSKCKFNHPRE), and 268 to 296 (RPSEPMCTFYMKTGKCKFGLSCKFHHPKD). The tract at residues 300 to 319 (PSSSQDIGSSVGLTSEPDAT) is disordered. 3 C3H1-type zinc fingers span residues 340–368 (RSGEVDCPFYLKTGSCKYGATCRYNHPER), 420–448 (RPGQSECDYYMKTGECKFGERCKFHHPAD), and 473–501 (REGALNCPYYMKTGTCKYGATCKFDHPPP). The disordered stretch occupies residues 505–524 (MAKTTSEADAAGATNTDTTQ). The span at 512-524 (ADAAGATNTDTTQ) shows a compositional bias: low complexity.

In terms of assembly, interacts with HEN4. Interacts with FLK and PEP. In terms of tissue distribution, highly expressed in inflorescences, at intermediate levels in leaves and stems and at lower levels in roots.

It localises to the nucleus speckle. Its function is as follows. Involved in flower development. Functions in floral reproductive organ identity by binding AGAMOUS (AG) pre-mRNA and promoting its processing. Functions in association with HUA2 and HEN4. The polypeptide is Zinc finger CCCH domain-containing protein 37 (HUA1) (Arabidopsis thaliana (Mouse-ear cress)).